The sequence spans 501 residues: Aldehyde dehydrogenase 1A1 (501 aa).

At Ser2 the chain carries N-acetylserine. Residues Lys91 and Lys128 each carry the N6-acetyllysine modification. NAD(+) is bound by residues 167–170 (LPWN), 193–196 (KPAE), 226–227 (GP), and 246–247 (GS). N6-acetyllysine is present on Lys252. Residue Glu269 is the Proton acceptor of the active site. Residue 269-271 (ELG) participates in NAD(+) binding. Cys303 acts as the Nucleophile in catalysis. A mediates interaction with PRMT3 region spans residues 336 to 501 (LTPGVSQGPQ…VTVKISQKNS (166 aa)). Thr337 bears the Phosphothreonine mark. 349 to 353 (EQYDK) contacts NAD(+). N6-acetyllysine occurs at positions 353 and 367. 400–402 (EIF) serves as a coordination point for NAD(+). The residue at position 410 (Lys410) is an N6-acetyllysine. Ser413 carries the phosphoserine modification. Lys419, Lys435, and Lys495 each carry N6-acetyllysine.

The protein belongs to the aldehyde dehydrogenase family. In terms of assembly, homotetramer. Interacts with PRMT3; the interaction is direct, inhibits ALDH1A1 aldehyde dehydrogenase activity and is independent of the methyltransferase activity of PRMT3. Post-translationally, the N-terminus is blocked most probably by acetylation.

The protein resides in the cytoplasm. It is found in the cytosol. It localises to the cell projection. Its subcellular location is the axon. The enzyme catalyses an aldehyde + NAD(+) + H2O = a carboxylate + NADH + 2 H(+). The catalysed reaction is all-trans-retinal + NAD(+) + H2O = all-trans-retinoate + NADH + 2 H(+). It carries out the reaction 9-cis-retinal + NAD(+) + H2O = 9-cis-retinoate + NADH + 2 H(+). It catalyses the reaction 11-cis-retinal + NAD(+) + H2O = 11-cis-retinoate + NADH + 2 H(+). The enzyme catalyses 13-cis-retinal + NAD(+) + H2O = 13-cis-retinoate + NADH + 2 H(+). The catalysed reaction is 3-deoxyglucosone + NAD(+) + H2O = 2-dehydro-3-deoxy-D-gluconate + NADH + 2 H(+). It carries out the reaction (E)-4-hydroxynon-2-enal + NAD(+) + H2O = (E)-4-hydroxynon-2-enoate + NADH + 2 H(+). It catalyses the reaction malonaldehyde + NAD(+) + H2O = 3-oxopropanoate + NADH + 2 H(+). The enzyme catalyses hexanal + NAD(+) + H2O = hexanoate + NADH + 2 H(+). The catalysed reaction is propanal + NAD(+) + H2O = propanoate + NADH + 2 H(+). It carries out the reaction acetaldehyde + NAD(+) + H2O = acetate + NADH + 2 H(+). It catalyses the reaction benzaldehyde + NAD(+) + H2O = benzoate + NADH + 2 H(+). The enzyme catalyses 4-aminobutanal + NAD(+) + H2O = 4-aminobutanoate + NADH + 2 H(+). The protein operates within cofactor metabolism; retinol metabolism. In terms of biological role, cytosolic dehydrogenase that catalyzes the irreversible oxidation of a wide range of aldehydes to their corresponding carboxylic acid. Functions downstream of retinol dehydrogenases and catalyzes the oxidation of retinaldehyde into retinoic acid, the second step in the oxidation of retinol/vitamin A into retinoic acid. This pathway is crucial to control the levels of retinol and retinoic acid, two important molecules which excess can be teratogenic and cytotoxic. Also oxidizes aldehydes resulting from lipid peroxidation like (E)-4-hydroxynon-2-enal/HNE, malonaldehyde and hexanal that form protein adducts and are highly cytotoxic. By participating for instance to the clearance of (E)-4-hydroxynon-2-enal/HNE in the lens epithelium prevents the formation of HNE-protein adducts and lens opacification. Also functions downstream of fructosamine-3-kinase in the fructosamine degradation pathway by catalyzing the oxidation of 3-deoxyglucosone, the carbohydrate product of fructosamine 3-phosphate decomposition, which is itself a potent glycating agent that may react with lysine and arginine side-chains of proteins. Also has an aminobutyraldehyde dehydrogenase activity and is probably part of an alternative pathway for the biosynthesis of GABA/4-aminobutanoate in midbrain, thereby playing a role in GABAergic synaptic transmission. The polypeptide is Aldehyde dehydrogenase 1A1 (Equus caballus (Horse)).